Consider the following 1128-residue polypeptide: Nck-associated protein 1 (1128 aa).

Ser-2 is modified (N-acetylserine). The disordered stretch occupies residues 640-665 (AVNKKSKKQTGKKGEPEREKPGVESM). Over residues 651–665 (KKGEPEREKPGVESM) the composition is skewed to basic and acidic residues. The chain crosses the membrane as a helical span at residues 995–1015 (IACLLMVFVAVSLPTLASNVM).

This sequence belongs to the HEM-1/HEM-2 family. In terms of assembly, component of the WAVE1 complex composed of ABI2, CYFIP1 or CYFIP2, BRK1, NCKAP1 and WASF1/WAVE1. Within the complex, a heterodimer containing NCKAP1 and CYFIP1 interacts with a heterotrimer formed by WAVE1, ABI2 and BRK1. Component of the WAVE2 complex composed of ABI1, CYFIP1/SRA1, NCKAP1/NAP1 and WASF2/WAVE2. CYFIP2 binds to activated RAC1 which causes the complex to dissociate, releasing activated WASF1. The complex can also be activated by NCK1. Associates preferentially with the first SH3 domain of NCK. Interacts with NYAP1, NYAP2 and MYO16. Interacts with TMEM132D. As to expression, preferentially expressed in brain, heart, liver and testis.

It localises to the cell membrane. The protein localises to the cell projection. Its subcellular location is the lamellipodium membrane. In terms of biological role, part of the WAVE complex that regulates lamellipodia formation. The WAVE complex regulates actin filament reorganization via its interaction with the Arp2/3 complex. Actin remodeling activity is regulated by RAC1. As component of the WAVE1 complex, required for BDNF-NTRK2 endocytic trafficking and signaling from early endosomes. The polypeptide is Nck-associated protein 1 (Nckap1) (Rattus norvegicus (Rat)).